The sequence spans 737 residues: Lysyl oxidase homolog 2A (737 aa).

The first 18 residues, 1-18 (MAVSSALCIFSLLVLAQA), serve as a signal peptide directing secretion. SRCR domains are found at residues 29–130 (LRLA…VICN), 159–270 (IRPI…VSCV), 294–393 (VRLR…VRCN), and 403–512 (IRLS…VSCS). Cystine bridges form between Cys-55/Cys-119, Cys-68/Cys-129, Cys-99/Cys-109, Cys-188/Cys-259, Cys-201/Cys-269, Cys-235/Cys-245, Cys-319/Cys-382, Cys-332/Cys-392, and Cys-363/Cys-373. Residue Asn-256 is glycosylated (N-linked (GlcNAc...) asparagine). The N-linked (GlcNAc...) asparagine glycan is linked to Asn-423. 3 disulfide bridges follow: Cys-432–Cys-498, Cys-445–Cys-511, and Cys-479–Cys-489. The segment at 516–718 (PDLVLNAQLV…WTYSCHIGGS (203 aa)) is lysyl-oxidase like. Residues Asp-517 and Leu-518 each contribute to the Ca(2+) site. 4 disulfide bridges follow: Cys-541–Cys-592, Cys-547–Cys-662, Cys-624–Cys-640, and Cys-630–Cys-652. Residues His-593, His-595, and His-597 each contribute to the Cu cation site. N-linked (GlcNAc...) asparagine glycosylation is present at Asn-611. The segment at residues 620–656 (KASFCLEDTHCDEGISKRYHCANFGEQGITVGCWDTY) is a cross-link (lysine tyrosylquinone (Lys-Tyr)). Position 656 is a 2',4',5'-topaquinone (Tyr-656). Residues Glu-689, Asp-691, Asn-694, and Asn-695 each coordinate Ca(2+). Cys-699 and Cys-713 are joined by a disulfide.

Belongs to the lysyl oxidase family. Cu cation is required as a cofactor. Requires lysine tyrosylquinone residue as cofactor. Post-translationally, the lysine tyrosylquinone cross-link (LTQ) is generated by condensation of the epsilon-amino group of a lysine with a topaquinone produced by oxidation of tyrosine.

The protein localises to the secreted. Its subcellular location is the extracellular space. It is found in the extracellular matrix. The protein resides in the basement membrane. It localises to the nucleus. The protein localises to the chromosome. Its subcellular location is the endoplasmic reticulum. The enzyme catalyses L-lysyl-[protein] + O2 + H2O = (S)-2-amino-6-oxohexanoyl-[protein] + H2O2 + NH4(+). In terms of biological role, mediates the post-translational oxidative deamination of lysine residues on target proteins leading to the formation of deaminated lysine (allysine). Acts as a transcription corepressor and specifically mediates deamination of trimethylated 'Lys-4' of histone H3 (H3K4me3), a specific tag for epigenetic transcriptional activation. Shows no activity against histone H3 when it is trimethylated on 'Lys-9' (H3K9me3) or 'Lys-27' (H3K27me3) or when 'Lys-4' is monomethylated (H3K4me1) or dimethylated (H3K4me2). Also mediates deamination of methylated TAF10, a member of the transcription factor IID (TFIID) complex, which induces release of TAF10 from promoters, leading to inhibition of TFIID-dependent transcription. LOXL2-mediated deamination of TAF10 results in transcriptional repression of genes required for embryonic stem cell pluripotency. Involved in epithelial to mesenchymal transition (EMT) and participates in repression of E-cadherin, probably by mediating deamination of histone H3. When secreted into the extracellular matrix, promotes cross-linking of extracellular matrix proteins by mediating oxidative deamination of peptidyl lysine residues in precursors to fibrous collagen and elastin. Acts as a regulator of sprouting angiogenesis, probably via collagen IV scaffolding. Acts as a regulator of chondrocyte differentiation, probably by regulating expression of factors that control chondrocyte differentiation. Required with loxl2b for correct expression of Sox2 and for neural differentiation. In Danio rerio (Zebrafish), this protein is Lysyl oxidase homolog 2A (loxl2a).